The chain runs to 382 residues: S-adenosylmethionine synthase (382 aa).

ATP is bound at residue His-16. A Mg(2+)-binding site is contributed by Asp-18. Glu-44 is a K(+) binding site. Residues Glu-57 and Gln-100 each contribute to the L-methionine site. The interval 100–110 (QSADIAIGVDE) is flexible loop. ATP contacts are provided by residues 165-167 (DAK), Asp-240, 246-247 (RK), Ala-263, and Lys-267. Asp-240 serves as a coordination point for L-methionine. Lys-271 lines the L-methionine pocket.

Belongs to the AdoMet synthase family. In terms of assembly, homotetramer; dimer of dimers. It depends on Mg(2+) as a cofactor. K(+) serves as cofactor.

It is found in the cytoplasm. It carries out the reaction L-methionine + ATP + H2O = S-adenosyl-L-methionine + phosphate + diphosphate. It participates in amino-acid biosynthesis; S-adenosyl-L-methionine biosynthesis; S-adenosyl-L-methionine from L-methionine: step 1/1. In terms of biological role, catalyzes the formation of S-adenosylmethionine (AdoMet) from methionine and ATP. The overall synthetic reaction is composed of two sequential steps, AdoMet formation and the subsequent tripolyphosphate hydrolysis which occurs prior to release of AdoMet from the enzyme. The polypeptide is S-adenosylmethionine synthase (Alcanivorax borkumensis (strain ATCC 700651 / DSM 11573 / NCIMB 13689 / SK2)).